A 579-amino-acid polypeptide reads, in one-letter code: uncharacterized protein (579 aa).

The next 3 helical transmembrane spans lie at 173–193 (IAMG…GGLA), 196–216 (FVAA…MIGA), and 218–238 (YLGT…GFGA).

It belongs to the TMCO4 family.

Its subcellular location is the cytoplasm. The protein localises to the nucleus membrane. This is an uncharacterized protein from Schizosaccharomyces pombe (strain 972 / ATCC 24843) (Fission yeast).